Reading from the N-terminus, the 178-residue chain is ATP synthase subunit delta (178 aa).

Belongs to the ATPase delta chain family. F-type ATPases have 2 components, F(1) - the catalytic core - and F(0) - the membrane proton channel. F(1) has five subunits: alpha(3), beta(3), gamma(1), delta(1), epsilon(1). F(0) has three main subunits: a(1), b(2) and c(10-14). The alpha and beta chains form an alternating ring which encloses part of the gamma chain. F(1) is attached to F(0) by a central stalk formed by the gamma and epsilon chains, while a peripheral stalk is formed by the delta and b chains.

Its subcellular location is the cell membrane. In terms of biological role, f(1)F(0) ATP synthase produces ATP from ADP in the presence of a proton or sodium gradient. F-type ATPases consist of two structural domains, F(1) containing the extramembraneous catalytic core and F(0) containing the membrane proton channel, linked together by a central stalk and a peripheral stalk. During catalysis, ATP synthesis in the catalytic domain of F(1) is coupled via a rotary mechanism of the central stalk subunits to proton translocation. This protein is part of the stalk that links CF(0) to CF(1). It either transmits conformational changes from CF(0) to CF(1) or is implicated in proton conduction. The chain is ATP synthase subunit delta from Streptococcus thermophilus (strain ATCC BAA-250 / LMG 18311).